Reading from the N-terminus, the 256-residue chain is Small ribosomal subunit protein eS1 (256 aa).

Residues 1–18 show a composition bias toward basic residues; it reads MAVGKNKRLSKGKKGIKK. The segment at 1-20 is disordered; that stretch reads MAVGKNKRLSKGKKGIKKRT. Position 2 is an N-acetylalanine; partial (Ala2).

This sequence belongs to the eukaryotic ribosomal protein eS1 family. In terms of assembly, component of the small ribosomal subunit. Mature ribosomes consist of a small (40S) and a large (60S) subunit. The 40S subunit contains about 33 different proteins and 1 molecule of RNA (18S). The 60S subunit contains about 49 different proteins and 3 molecules of RNA (25S, 5.8S and 5S).

It is found in the cytoplasm. This Aspergillus terreus (strain NIH 2624 / FGSC A1156) protein is Small ribosomal subunit protein eS1 (rps1).